The following is a 630-amino-acid chain: DNA topoisomerase 4 subunit B (630 aa).

ATP contacts are provided by residues Tyr5, Asn42, Asp69, Gly110–Ile116, and Lys334. Residues Thr412–Pro525 enclose the Toprim domain. Residues Glu418, Asp490, and Asp492 each contribute to the Mg(2+) site.

Belongs to the type II topoisomerase family. ParE type 1 subfamily. In terms of assembly, heterotetramer composed of ParC and ParE. Mg(2+) is required as a cofactor. It depends on Mn(2+) as a cofactor. The cofactor is Ca(2+).

The enzyme catalyses ATP-dependent breakage, passage and rejoining of double-stranded DNA.. Its activity is regulated as follows. Pyrrolopyrimidines inhibit both GyrB and its paralog in topoisomerase IV (parE). Functionally, topoisomerase IV is essential for chromosome segregation; it is the principal protein responsible for decatenating newly replicated chromosomes. It relaxes supercoiled DNA. MukB stimulates the relaxation activity of topoisomerase IV and also has a modest effect on decatenation. This chain is DNA topoisomerase 4 subunit B, found in Escherichia coli (strain K12).